A 99-amino-acid polypeptide reads, in one-letter code: Large ribosomal subunit protein eL21 (99 aa).

Belongs to the eukaryotic ribosomal protein eL21 family.

The polypeptide is Large ribosomal subunit protein eL21 (Staphylothermus marinus (strain ATCC 43588 / DSM 3639 / JCM 9404 / F1)).